Reading from the N-terminus, the 660-residue chain is Secretin PulD (660 aa).

The N-terminal stretch at 1 to 27 (MIIANVIRSFSLTLLIFAALLFRPAAA) is a signal peptide. Residues 28-124 (EEFSASFKGT…VASDAAPGIG (97 aa)) are N0. The N1 stretch occupies residues 126–190 (EVVTRVVPLT…TIVERVDNAG (65 aa)). Residues 191-264 (DRSVVTVPLS…MIKQLDRQQA (74 aa)) are N2. The segment at 267–341 (GNTKVIYLKY…DLERVIAQLD (75 aa)) is N3. Residues 346-596 (QVLVEAIIAE…LFIRPTVIRD (251 aa)) form a secretin region. Residues 598–660 (DEYRQASSGQ…IDAFNLGGNL (63 aa)) form a s domain region.

This sequence belongs to the bacterial secretin family. GSP D subfamily. As to quaternary structure, forms a cylindrical channel with 15 subunits.

The protein resides in the cell outer membrane. In terms of biological role, involved in a type II secretion system (T2SS, formerly general secretion pathway, GSP) for the export of proteins. Required for the translocation of pullulanase. This subunit forms the outer membrane channel. This is Secretin PulD (pulD) from Klebsiella pneumoniae.